The primary structure comprises 1072 residues: RIMS-binding protein 2 (1072 aa).

The SH3 1 domain maps to 181-248 (GKVHLCVARY…PSNFVDFIQD (68 aa)). 3 consecutive Fibronectin type-III domains span residues 311–404 (VPYP…GKDV), 407–489 (APSQ…KKEA), and 503–604 (PPQD…VPPA). Disordered regions lie at residues 597-681 (PDLL…APVS) and 713-800 (SAGQ…TSHN). The span at 599-615 (LLVPPAPHPRTAPPPKP) shows a compositional bias: pro residues. The segment covering 620-635 (MDTKDQHLGPHVKVDE) has biased composition (basic and acidic residues). Low complexity predominate over residues 660–670 (GPGRRSPSPSR). Serine 720 and serine 728 each carry phosphoserine. Basic and acidic residues-rich tracts occupy residues 730-743 (EVKR…DFLK) and 754-765 (CHGDEYHTESSR). The span at 771 to 781 (DIMEEDEEELY) shows a compositional bias: acidic residues. Serine 852 and serine 859 each carry phosphoserine. Threonine 861 carries the phosphothreonine modification. SH3 domains lie at 868-936 (LPAR…EIHA) and 972-1039 (VPTR…EVPD). The tract at residues 1044–1072 (HLSDAPPHYSHDPPMRSKAKRKKSVHFTP) is disordered. Over residues 1060 to 1072 (SKAKRKKSVHFTP) the composition is skewed to basic residues.

Belongs to the RIMBP family. In terms of assembly, interacts with RIMS1, RIMS2, CACNA1D and CACNA1B, and potentially with other Ca(2+) channel alpha-1 isoforms.

It localises to the cell membrane. It is found in the synapse. Functionally, plays a role in the synaptic transmission as bifunctional linker that interacts simultaneously with RIMS1, RIMS2, CACNA1D and CACNA1B. The sequence is that of RIMS-binding protein 2 (Rimbp2) from Mus musculus (Mouse).